The primary structure comprises 61 residues: Large ribosomal subunit protein uL29 (61 aa).

This sequence belongs to the universal ribosomal protein uL29 family.

The sequence is that of Large ribosomal subunit protein uL29 from Campylobacter jejuni subsp. jejuni serotype O:6 (strain 81116 / NCTC 11828).